A 505-amino-acid chain; its full sequence is Exoglucanase 1 (505 aa).

Residues 1 to 17 (MYRKLAVISAFLAAARA) form the signal peptide. Gln18 is subject to Pyrrolidone carboxylic acid. Residues 18 to 449 (QQVCTQQAET…GSTGGNTGSN (432 aa)) are catalytic. 4 disulfides stabilise this stretch: Cys21–Cys88, Cys36–Cys41, Cys66–Cys87, and Cys77–Cys83. N-linked (GlcNAc...) asparagine glycans are attached at residues Asn93 and Asn126. 6 cysteine pairs are disulfide-bonded: Cys151-Cys410, Cys185-Cys223, Cys189-Cys222, Cys243-Cys269, Cys251-Cys256, and Cys274-Cys344. Catalysis depends on Glu225, which acts as the Nucleophile. Residue Glu230 is the Proton donor/acceptor of the active site. Asn283 and Asn397 each carry an N-linked (GlcNAc...) asparagine glycan. 2 disordered regions span residues 399–423 (TAST…VEAQ) and 440–472 (GSTG…ATQT). Residues 409–423 (SCSTSSGVPAQVEAQ) are compositionally biased toward polar residues. Positions 447 to 470 (GSNPPGTSTTRAPPSSTGSSPTAT) are enriched in low complexity. Positions 450–468 (PPGTSTTRAPPSSTGSSPT) are linker. A CBM1 domain is found at 469-505 (ATQTHYGQCGGTGWTGPTRCASGYTCQVLNPFYSQCL).

It belongs to the glycosyl hydrolase 7 (cellulase C) family. Post-translationally, O-glycosylated. O-glycosylation of the cellulase linker provides protection from proteolysis. Linker glycans also contribute to binding affinity of cellobiohydrolases to cellulose.

It localises to the secreted. It carries out the reaction Hydrolysis of (1-&gt;4)-beta-D-glucosidic linkages in cellulose and cellotetraose, releasing cellobiose from the non-reducing ends of the chains.. Its function is as follows. Exocellobiohydrolases (CBH) that catalyzes the hydrolysis of 1,4-beta-D-glucosidic bonds in cellulose to release the disaccharide cellobiose. The degradation of cellulose involves an interplay between different cellulolytic enzymes. Hydrolysis starts with endoglucanases (EGs), which cut internal beta-1,4-glucosidic bonds in cellulose to reduce the polymerization degree of the substrate and create new chain ends for exocellobiohydrolases (CBHs). The CBHs release the disaccharide cellobiose from the non-reducing end of the cellulose polymer chain. Finally, beta-1,4-glucosidases hydrolyze the cellobiose and other short cello-oligosaccharides into glucose units. This chain is Exoglucanase 1 (cbh1), found in Trichoderma harzianum (Hypocrea lixii).